Consider the following 443-residue polypeptide: MPKIFRSLYVQVIIAIVLGILVGALFPKFGEALKPLGDIFVKLIKMVIAPIIFATVVSGVAHMRDTRKVGRVGGKALIYFEVVSTLALIIGMVVMNVLRPGAGMNVDPATLDTAGLTKYTEAAGEMTVWDHILKIIPDTLVSAFTGGELLPVLLVALLFGFALMRLGKLGDQILYGIDALNQVVFVILGFIMRLAPIGAFGAMAFTVGKYGLKSLTSLGYLMGSFYLTCLLFIFVVLGLIARAAGFSIFKLIRYIREELLIVLGTSSSESALPRLMMKLEHAGAEKSVVGLVVPTGYSFNLDGTSIYLTMAALFIAQATNTPLGLGEQLSLLAVLLLTSKGAAGVTGSGFITLAATLGAVGHVPVAGMALILGIDRFMSEARALTNFIGNAVATLVVARSENAVDMNRLTRALNGEDLPTTEPDVASEERGEGREIDSSRPVT.

Transmembrane regions (helical) follow at residues 7-26 (SLYV…GALF), 46-63 (MVIA…VAHM), 76-98 (ALIY…MNVL), 140-162 (LVSA…FGFA), 183-205 (VVFV…AMAF), 218-240 (LGYL…LGLI), and 350-372 (FITL…ALIL). Positions 415 to 443 (GEDLPTTEPDVASEERGEGREIDSSRPVT) are disordered. The span at 427 to 443 (SEERGEGREIDSSRPVT) shows a compositional bias: basic and acidic residues.

The protein belongs to the dicarboxylate/amino acid:cation symporter (DAACS) (TC 2.A.23) family.

The protein resides in the cell membrane. In terms of biological role, responsible for the transport of dicarboxylates such as succinate, fumarate, and malate across the membrane. The sequence is that of C4-dicarboxylate transport protein (dctA) from Deinococcus radiodurans (strain ATCC 13939 / DSM 20539 / JCM 16871 / CCUG 27074 / LMG 4051 / NBRC 15346 / NCIMB 9279 / VKM B-1422 / R1).